A 1061-amino-acid polypeptide reads, in one-letter code: Lysine-specific demethylase jmjd-3.1 (1061 aa).

2 disordered regions span residues 30–49 and 256–417; these read VKNS…MRPV and KSLS…KRRT. Positions 271-287 are enriched in polar residues; the sequence is QHTNSVGSSIGTTSGDS. Over residues 310 to 320 the composition is skewed to low complexity; sequence STSSEFTETTS. Residues 321 to 330 are compositionally biased toward polar residues; the sequence is VANQTESNAG. Residues 369-417 form a required for nuclear localization region; that stretch reads KKKEQSATEPPIPRTKRAYTKNPNTIRKRRMKKNQSDDEEDDGPPKRRT. Positions 418-759 are required for binding of unc-3 and for function in Y-to-PDA transdifferentiation; sequence INYQIEFRDA…FGTNIDLLSE (342 aa). The JmjC domain maps to 760–923; that stretch reads NFKKQMNEIE…LATSIVAHDH (164 aa). Positions 811, 813, and 891 each coordinate Fe cation. 4 residues coordinate Zn(2+): cysteine 998, cysteine 1001, cysteine 1025, and cysteine 1028.

It belongs to the UTX family. Interacts with wdr-5.1 and unc-3. The cofactor is Fe(2+). As to expression, mainly expressed in head and tail.

The protein resides in the nucleus. Functionally, histone demethylase that specifically demethylates trimethylated 'Lys-27' of histone H3, a mark associated with transcriptional repression, thereby playing a central role in the histone code. Involved in the transcriptional regulation of the heat shock response, unfolded protein response and possibly other stress response target genes. Required for gonad development and organization. Required for the robust transdifferentiation of the Y rectal epithelial cell to the PDA motor neuron during larval development. Acts cell-autonomously in Y-to-PDA transdifferentiation, which depends on the demethylase activity and on recognition of the H3 tail. Cooperates with set-2 and unc-3 to ensure robust Y-to-PDA transdifferentiation. Promotes mitochondrial stress-induced longevity. Involved in lifespan regulation. In Caenorhabditis elegans, this protein is Lysine-specific demethylase jmjd-3.1.